The primary structure comprises 551 residues: MDIQSNVLTITSGSTPTDTSSNGQAAKSTKERIKRSDFPSDFVFGAATASYQVEGAWNEGGKGMSNWDYFTQSQPGGISDFSNGTIAIDHYNMFKDDVVVMKKLGLKAYRFSLSWPRILPGGRLCHGVSKEGVQFYNDLIDALLAADIEPYITIFHWDIPQCLQLEYGGFLHERVVKDFIEYSEICFWEFGDRVKYWITLNEPWSFTVQGYVAGAFPPNRGVTPKDTEETQKHARLHRGGGKLLAAFKYGNPGTEPYKVAHNLILCHAHAVDIYRTKYQESQGGKIGITNCISWNEPLTDSQEDKDAATRGNDFMLGWFVEPVVTGEYPESMIKYVGDRLPKFSEKEEKLVKGSYDFLGINYYTSTYTSDDPTKPTTDSYFTDSHTKTSHERNKVPIGAQAGSDWLYIVPWGIYRVMVDMKKRYNDPVIYITENGVDEVNDKSKTSTEALKDDIRIHYHQEHLYYLKLAMDQGVNVKGYFIWSLFDNFEWAAGFSVRFGVMYVDYANGRYTRLPKRSAVWWRNFLTKPTAVPLKNEPEKSEDRRKRLRGST.

Polar residues predominate over residues 1–27; it reads MDIQSNVLTITSGSTPTDTSSNGQAAK. Positions 1–33 are disordered; that stretch reads MDIQSNVLTITSGSTPTDTSSNGQAAKSTKERI. Residues glutamine 52, histidine 156, 201-202, tyrosine 363, glutamate 433, tryptophan 482, 489-490, and phenylalanine 498 contribute to the a beta-D-glucoside site; these read NE and EW. Glutamate 202 (proton donor) is an active-site residue. Glutamate 433 acts as the Nucleophile in catalysis. Residues 502–551 are required for the homomultimerization; that stretch reads YVDYANGRYTRLPKRSAVWWRNFLTKPTAVPLKNEPEKSEDRRKRLRGST. Residues 532-551 form a disordered region; the sequence is PLKNEPEKSEDRRKRLRGST. Residues 535–544 show a composition bias toward basic and acidic residues; sequence NEPEKSEDRR. The Nuclear localization signal signature appears at 542-550; it reads DRRKRLRGS.

It belongs to the glycosyl hydrolase 1 family. In terms of assembly, homomultimer. Native form of the enzyme requires at least an octamer conformation. As to expression, expressed in expanding leaves and in young drupes, mostly in the developing seed coat tissues, the perisperm and the mesocarp. Also detected in shoot and root meristems, flower buds, developing ovaries and tapetal cells of the anther. Not detected in embryos or endosperm, or in leaf trichomes.

It is found in the nucleus. The catalysed reaction is oleuropein + H2O = oleuropein aglycone + D-glucose. Its function is as follows. Major beta-glucosidase activating oleuropein into a potent protein cross-linking agent. No activity with rutin, luteolin or p-nitrophenyl-beta-glucopyranoside as substrates. This Olea europaea (Common olive) protein is Oleuropein beta-glucosidase.